The primary structure comprises 286 residues: Pantothenate synthetase (286 aa).

30 to 37 (MGFLHEGH) provides a ligand contact to ATP. Residue His37 is the Proton donor of the active site. Gln61 lines the (R)-pantoate pocket. Gln61 contacts beta-alanine. Residue 147 to 150 (GLKD) coordinates ATP. Gln153 serves as a coordination point for (R)-pantoate. Residues Val176 and 184–187 (KSSR) each bind ATP.

This sequence belongs to the pantothenate synthetase family. In terms of assembly, homodimer.

It is found in the cytoplasm. The enzyme catalyses (R)-pantoate + beta-alanine + ATP = (R)-pantothenate + AMP + diphosphate + H(+). The protein operates within cofactor biosynthesis; (R)-pantothenate biosynthesis; (R)-pantothenate from (R)-pantoate and beta-alanine: step 1/1. Its function is as follows. Catalyzes the condensation of pantoate with beta-alanine in an ATP-dependent reaction via a pantoyl-adenylate intermediate. This chain is Pantothenate synthetase, found in Bacillus velezensis (strain DSM 23117 / BGSC 10A6 / LMG 26770 / FZB42) (Bacillus amyloliquefaciens subsp. plantarum).